The chain runs to 251 residues: Flap endonuclease Xni (251 aa).

Mg(2+) is bound at residue Asp104. A 5'-3' exonuclease domain is found at 160 to 248; sequence VSPQQLSDYW…ALTGNLQQLR (89 aa). Leu171, Ala172, Pro180, Val182, and Ile185 together coordinate K(+). The segment at 184-189 is interaction with DNA; sequence GIGPKT.

The protein belongs to the Xni family. It depends on Mg(2+) as a cofactor. Requires K(+) as cofactor.

Functionally, has flap endonuclease activity. During DNA replication, flap endonucleases cleave the 5'-overhanging flap structure that is generated by displacement synthesis when DNA polymerase encounters the 5'-end of a downstream Okazaki fragment. In Serratia proteamaculans (strain 568), this protein is Flap endonuclease Xni.